We begin with the raw amino-acid sequence, 145 residues long: Putative pre-16S rRNA nuclease (145 aa).

It belongs to the YqgF nuclease family.

Its subcellular location is the cytoplasm. Could be a nuclease involved in processing of the 5'-end of pre-16S rRNA. The sequence is that of Putative pre-16S rRNA nuclease from Pseudomonas fluorescens (strain ATCC BAA-477 / NRRL B-23932 / Pf-5).